The sequence spans 472 residues: Aspartyl/glutamyl-tRNA(Asn/Gln) amidotransferase subunit B (472 aa).

This sequence belongs to the GatB/GatE family. GatB subfamily. In terms of assembly, heterotrimer of A, B and C subunits.

It carries out the reaction L-glutamyl-tRNA(Gln) + L-glutamine + ATP + H2O = L-glutaminyl-tRNA(Gln) + L-glutamate + ADP + phosphate + H(+). The enzyme catalyses L-aspartyl-tRNA(Asn) + L-glutamine + ATP + H2O = L-asparaginyl-tRNA(Asn) + L-glutamate + ADP + phosphate + 2 H(+). Allows the formation of correctly charged Asn-tRNA(Asn) or Gln-tRNA(Gln) through the transamidation of misacylated Asp-tRNA(Asn) or Glu-tRNA(Gln) in organisms which lack either or both of asparaginyl-tRNA or glutaminyl-tRNA synthetases. The reaction takes place in the presence of glutamine and ATP through an activated phospho-Asp-tRNA(Asn) or phospho-Glu-tRNA(Gln). The chain is Aspartyl/glutamyl-tRNA(Asn/Gln) amidotransferase subunit B from Campylobacter jejuni subsp. jejuni serotype O:6 (strain 81116 / NCTC 11828).